Reading from the N-terminus, the 140-residue chain is Large ribosomal subunit protein uL11 (140 aa).

This sequence belongs to the universal ribosomal protein uL11 family. Part of the ribosomal stalk of the 50S ribosomal subunit. Interacts with L10 and the large rRNA to form the base of the stalk. L10 forms an elongated spine to which L12 dimers bind in a sequential fashion forming a multimeric L10(L12)X complex. In terms of processing, one or more lysine residues are methylated.

Its function is as follows. Forms part of the ribosomal stalk which helps the ribosome interact with GTP-bound translation factors. The protein is Large ribosomal subunit protein uL11 of Geotalea daltonii (strain DSM 22248 / JCM 15807 / FRC-32) (Geobacter daltonii).